The primary structure comprises 684 residues: Pheromone-processing carboxypeptidase KEX1 (684 aa).

A signal peptide spans 1–16; the sequence is MRFWYFSAILWVVCQA. Residues 17 to 588 are Lumenal-facing; sequence LPSKKQYSVA…QRKRRKGTFK (572 aa). Catalysis depends on residues S181 and D390. N-linked (GlcNAc...) asparagine glycosylation is found at N443 and N451. H454 is an active-site residue. Residues 498-582 are disordered; sequence DNSKLGVLGI…KEEQDRQRKR (85 aa). Positions 514 to 547 are enriched in acidic residues; the sequence is EEEELEEEFDQYVDELEEGESESGLLDDDKEDET. Basic and acidic residues predominate over residues 554 to 578; that stretch reads NDDKNKGGEDKPNENPDKEKEEQDR. A helical membrane pass occupies residues 589 to 609; the sequence is IFGITILVVLTLGSFVFYIYI. Topologically, residues 610 to 684 are cytoplasmic; the sequence is RKHTNKTRAI…LDESFELENL (75 aa). The tract at residues 641–684 is disordered; it reads LEHGYDFETDQSQPRSGQSAPKKNGSYTRVPNTELDESFELENL. Polar residues predominate over residues 650-671; that stretch reads DQSQPRSGQSAPKKNGSYTRVP. Residues 674 to 684 are compositionally biased toward acidic residues; it reads ELDESFELENL.

Belongs to the peptidase S10 family.

The protein resides in the golgi apparatus. It localises to the trans-Golgi network membrane. The enzyme catalyses Preferential release of a C-terminal arginine or lysine residue.. Functionally, protease with a carboxypeptidase B-like function involved in the C-terminal processing of the lysine and arginine residues from protein precursors. Promotes cell fusion and is involved in the programmed cell death. The protein is Pheromone-processing carboxypeptidase KEX1 (KEX1) of Zygosaccharomyces rouxii (strain ATCC 2623 / CBS 732 / NBRC 1130 / NCYC 568 / NRRL Y-229).